Reading from the N-terminus, the 82-residue chain is Large ribosomal subunit protein bL31B (82 aa).

The protein belongs to the bacterial ribosomal protein bL31 family. Type B subfamily. In terms of assembly, part of the 50S ribosomal subunit.

This chain is Large ribosomal subunit protein bL31B, found in Acinetobacter baylyi (strain ATCC 33305 / BD413 / ADP1).